The following is a 418-amino-acid chain: UPF0754 membrane protein alr5253 (418 aa).

Helical transmembrane passes span 10-30 and 394-414; these read WSHLWLYVSPPILGGIIGYFT and IVSLGGILGLIVGLFQTAFFI.

It belongs to the UPF0754 family.

The protein resides in the cell inner membrane. This is UPF0754 membrane protein alr5253 from Nostoc sp. (strain PCC 7120 / SAG 25.82 / UTEX 2576).